The primary structure comprises 42 residues: uncharacterized protein (42 aa).

The segment at 1–42 (MTTGKPQSFEKMRTPFPGRSKAKGPQSDIIPSAPPNTPVTEH) is disordered. Pro residues predominate over residues 32–42 (SAPPNTPVTEH).

This is an uncharacterized protein from Schizosaccharomyces pombe (strain 972 / ATCC 24843) (Fission yeast).